Here is a 239-residue protein sequence, read N- to C-terminus: 2',3'-cyclic-nucleotide 3'-phosphodiesterase (239 aa).

Catalysis depends on proton donor/acceptor residues His39 and His150.

This sequence belongs to the 2H phosphoesterase superfamily. CPD1 family.

The protein localises to the golgi apparatus. It catalyses the reaction ADP-alpha-D-ribose 1'',2''-cyclic phosphate + H2O = ADP-alpha-D-ribose 1''-phosphate + H(+). The catalysed reaction is 2',3'-cyclophospho-AMP + H2O = adenosine 2'-phosphate + H(+). The enzyme catalyses 2',3'-cyclophospho-GMP + H2O = guanosine 2'-phosphate + H(+). It carries out the reaction 2',3'-cyclophospho-UMP + H2O = uridine 2'-phosphate + H(+). It catalyses the reaction 2',3'-cyclophospho-CMP + H2O = cytidine 2'-phosphate + H(+). The catalysed reaction is a nucleoside 2',3'-cyclic phosphate + H2O = a nucleoside 2'-phosphate + H(+). Its function is as follows. Involved in the metabolism of ADP-ribose 1',2'-cyclic phosphate which is produced as a consequence of tRNA splicing. This is 2',3'-cyclic-nucleotide 3'-phosphodiesterase from Saccharomyces cerevisiae (strain ATCC 204508 / S288c) (Baker's yeast).